A 364-amino-acid chain; its full sequence is GDSL esterase/lipase EXL3 (364 aa).

The N-terminal stretch at 1–32 (MKDNSSWSCSCSWSSWKICLLSVLFLTETITA) is a signal peptide. The active-site Nucleophile is the Ser50. Active-site residues include Asp339 and His342.

Belongs to the 'GDSL' lipolytic enzyme family. As to expression, flower buds.

It localises to the secreted. The protein is GDSL esterase/lipase EXL3 (EXL3) of Arabidopsis thaliana (Mouse-ear cress).